The sequence spans 379 residues: UDP-4-amino-4-deoxy-L-arabinose--oxoglutarate aminotransferase (379 aa).

An N6-(pyridoxal phosphate)lysine modification is found at Lys-182.

It belongs to the DegT/DnrJ/EryC1 family. ArnB subfamily. In terms of assembly, homodimer. The cofactor is pyridoxal 5'-phosphate.

The enzyme catalyses UDP-4-amino-4-deoxy-beta-L-arabinose + 2-oxoglutarate = UDP-beta-L-threo-pentopyranos-4-ulose + L-glutamate. It participates in nucleotide-sugar biosynthesis; UDP-4-deoxy-4-formamido-beta-L-arabinose biosynthesis; UDP-4-deoxy-4-formamido-beta-L-arabinose from UDP-alpha-D-glucuronate: step 2/3. It functions in the pathway bacterial outer membrane biogenesis; lipopolysaccharide biosynthesis. Catalyzes the conversion of UDP-4-keto-arabinose (UDP-Ara4O) to UDP-4-amino-4-deoxy-L-arabinose (UDP-L-Ara4N). The modified arabinose is attached to lipid A and is required for resistance to polymyxin and cationic antimicrobial peptides. This Erwinia tasmaniensis (strain DSM 17950 / CFBP 7177 / CIP 109463 / NCPPB 4357 / Et1/99) protein is UDP-4-amino-4-deoxy-L-arabinose--oxoglutarate aminotransferase.